The primary structure comprises 177 residues: Small ribosomal subunit protein bS21m (177 aa).

The N-terminal 17 residues, Met1–Phe17, are a transit peptide targeting the mitochondrion.

Belongs to the bacterial ribosomal protein bS21 family. As to quaternary structure, component of the mitochondrial small ribosomal subunit (mt-SSU). Mature yeast 74S mitochondrial ribosomes consist of a small (37S) and a large (54S) subunit. The 37S small subunit contains a 15S ribosomal RNA (15S mt-rRNA) and 34 different proteins. The 54S large subunit contains a 21S rRNA (21S mt-rRNA) and 46 different proteins.

Its subcellular location is the mitochondrion. Component of the mitochondrial ribosome (mitoribosome), a dedicated translation machinery responsible for the synthesis of mitochondrial genome-encoded proteins, including at least some of the essential transmembrane subunits of the mitochondrial respiratory chain. The mitoribosomes are attached to the mitochondrial inner membrane and translation products are cotranslationally integrated into the membrane. In Saccharomyces cerevisiae (strain ATCC 204508 / S288c) (Baker's yeast), this protein is Small ribosomal subunit protein bS21m (MRP21).